Here is a 101-residue protein sequence, read N- to C-terminus: UPF0235 protein MMP1055 (101 aa).

Belongs to the UPF0235 family.

The polypeptide is UPF0235 protein MMP1055 (Methanococcus maripaludis (strain DSM 14266 / JCM 13030 / NBRC 101832 / S2 / LL)).